Reading from the N-terminus, the 379-residue chain is Probable purine permease 11 (379 aa).

10 helical membrane passes run tryptophan 43–leucine 63, tryptophan 76–leucine 96, isoleucine 114–valine 134, tyrosine 144–alanine 164, phenylalanine 167–leucine 187, isoleucine 203–methionine 223, valine 239–phenylalanine 259, valine 294–valine 313, isoleucine 314–phenylalanine 330, and methionine 334–tyrosine 354.

The protein belongs to the purine permeases (TC 2.A.7.14) family. May form a complex with the potassium channel subunit KAT1.

The protein resides in the membrane. This is Probable purine permease 11 (PUP11) from Arabidopsis thaliana (Mouse-ear cress).